Here is a 159-residue protein sequence, read N- to C-terminus: Fimbrial protein MyfA (159 aa).

The first 29 residues, 1 to 29 (MNMKKFVKKPLAIAVLMLASGGMVNMVHA), serve as a signal peptide directing secretion.

In terms of assembly, forms a homomer composed of subunits assembled in a large structure resistant to proteases and chaotropic agents.

Its subcellular location is the fimbrium. Major pilus subunit. Expressed only in pathogenic serotypes, it is part of myf, a probable virulence factor. The protein is Fimbrial protein MyfA (myfA) of Yersinia enterocolitica.